A 1168-amino-acid polypeptide reads, in one-letter code: Transcription-repair-coupling factor (1168 aa).

In terms of domain architecture, Helicase ATP-binding spans 633–794; the sequence is DMQKSRPMDR…MLGVRDLSVI (162 aa). 646 to 653 is a binding site for ATP; that stretch reads GDVGYGKT. The short motif at 747-750 is the DEEQ box element; it reads DEEQ. The 162-residue stretch at 808 to 969 folds into the Helicase C-terminal domain; that stretch reads VLEQNMSFIK…GFKIAMRDLN (162 aa).

In the N-terminal section; belongs to the UvrB family. The protein in the C-terminal section; belongs to the helicase family. RecG subfamily.

The protein localises to the cytoplasm. Its function is as follows. Couples transcription and DNA repair by recognizing RNA polymerase (RNAP) stalled at DNA lesions. Mediates ATP-dependent release of RNAP and its truncated transcript from the DNA, and recruitment of nucleotide excision repair machinery to the damaged site. The chain is Transcription-repair-coupling factor from Staphylococcus aureus (strain bovine RF122 / ET3-1).